Consider the following 414-residue polypeptide: MVYDIMDYDIELWDIVKKEINRQERHIDLVASENYISIQAMKAQGSQLTNKYAEGYPGKRYYGGCKYVDLIEQLAIDRAKVLFTAEYVNVQPHSGSQANFSVFNALLDPGDTILGMHLYHGGHLTHGSKVNFSGKLYKTIFYGVDKFGCIDYEQLCFLTERYRPKMIIGGFSAYSGIVDWARMRRIADSVGAYFFVDMAHIAGLVAAGVYPNPIPYAHVVTATTHKTLAGPRGGIILSNGDNDIEFYRKLDASVFPGSQGGPLMHVIAAKAVAFKEAMHVDFKRYQKQVIINSQKMAKEFLNNGFTVVSGIPYNHLFILDLTNHYITGKDASLVLERANIIVNKNCIPNDSHSPFITSGIRIGTAAVTRRGFNDNDVQEVARWICNILNDISNEKIILNAKKNVLDICYRHPVY.

(6S)-5,6,7,8-tetrahydrofolate is bound by residues Leu118 and 122–124 (GHL). Lys226 is subject to N6-(pyridoxal phosphate)lysine. 353–355 (SPF) is a (6S)-5,6,7,8-tetrahydrofolate binding site.

The protein belongs to the SHMT family. As to quaternary structure, homodimer. Requires pyridoxal 5'-phosphate as cofactor.

Its subcellular location is the cytoplasm. It catalyses the reaction (6R)-5,10-methylene-5,6,7,8-tetrahydrofolate + glycine + H2O = (6S)-5,6,7,8-tetrahydrofolate + L-serine. It participates in one-carbon metabolism; tetrahydrofolate interconversion. The protein operates within amino-acid biosynthesis; glycine biosynthesis; glycine from L-serine: step 1/1. Catalyzes the reversible interconversion of serine and glycine with tetrahydrofolate (THF) serving as the one-carbon carrier. This reaction serves as the major source of one-carbon groups required for the biosynthesis of purines, thymidylate, methionine, and other important biomolecules. Also exhibits THF-independent aldolase activity toward beta-hydroxyamino acids, producing glycine and aldehydes, via a retro-aldol mechanism. The sequence is that of Serine hydroxymethyltransferase from Blochmanniella floridana.